A 204-amino-acid chain; its full sequence is Large ribosomal subunit protein eL15 (204 aa).

Residues 185 to 204 are disordered; that stretch reads GGSRRAAWKRKNREHMHRKR. Basic residues predominate over residues 190-204; the sequence is AAWKRKNREHMHRKR.

This sequence belongs to the eukaryotic ribosomal protein eL15 family.

This is Large ribosomal subunit protein eL15 (RpL15) from Drosophila melanogaster (Fruit fly).